Reading from the N-terminus, the 516-residue chain is Rho guanine nucleotide exchange factor 9 (516 aa).

The SH3 domain maps to 8-67 (DSIVSAEAVWDHVTMANRELAFKAGDVIKVLDASNKDWWWGQIDDEEGWFPASFVRLWVN). The interaction with GPHN stretch occupies residues 100 to 110 (RDQMRANVINE). Residues 103-287 (MRANVINEIM…RNVTQQINER (185 aa)) form the DH domain. A PH domain is found at 318–425 (ELIYTGEMAW…WLRAFREERK (108 aa)). The interval 450–480 (RKASKQKGVNSARSVPPSYPPPQDPLNQGQY) is disordered. Ser502 carries the post-translational modification Phosphoserine.

As to quaternary structure, interacts with GPHN. Detected in embryonic and adult brain.

The protein localises to the cytoplasm. It is found in the postsynaptic density. Its function is as follows. Acts as a guanine nucleotide exchange factor (GEF) for CDC42. Promotes formation of GPHN clusters. The chain is Rho guanine nucleotide exchange factor 9 (Arhgef9) from Mus musculus (Mouse).